The sequence spans 491 residues: Cytosolic Fe-S cluster assembly factor NAR1 (491 aa).

The [4Fe-4S] cluster site is built by cysteine 20, cysteine 59, cysteine 62, cysteine 65, cysteine 177, cysteine 231, cysteine 412, and cysteine 416.

It belongs to the NARF family. In terms of assembly, interacts with CIA1.

The protein resides in the cytoplasm. Its subcellular location is the nucleus. Essential component of a cytosolic Fe/S protein assembly machinery. Required for maturation of extramitochondrial Fe/S proteins. May play a role in the transfer of pre-assembled Fe/S clusters to target apoproteins. In Saccharomyces cerevisiae (strain ATCC 204508 / S288c) (Baker's yeast), this protein is Cytosolic Fe-S cluster assembly factor NAR1 (NAR1).